The primary structure comprises 2799 residues: E3 ubiquitin-protein ligase UBR5 (2799 aa).

Thr2 carries the post-translational modification N-acetylthreonine. A compositionally biased stretch (basic and acidic residues) spans 77 to 88; it reads DRLELGKPDNND. Residues 77–175 are disordered; it reads DRLELGKPDN…DRGSGLLGSQ (99 aa). Residues 89–110 show a composition bias toward polar residues; it reads GSKLNSNSGAGRTSRPGRTSDS. The residue at position 110 (Ser110) is a Phosphoserine. Residues 135 to 144 are compositionally biased toward gly residues; it reads GVGGSGGGSS. Residues 184-226 form the UBA domain; sequence VIPEELISQAQVVLQGKSRSVIIRELQRTNLDVNLAVNNLLSR. At Ser327 the chain carries Phosphoserine. Positions 328 to 347 are enriched in basic and acidic residues; that stretch reads FDNERGSTSKEGEPNLDKKN. A disordered region spans residues 328–352; that stretch reads FDNERGSTSKEGEPNLDKKNTPVQS. Residues Ser352 and Ser578 each carry the phosphoserine modification. Positions 579-648 are disordered; it reads PESLKNMEKA…APKEEEKVNE (70 aa). Residues 583–604 show a composition bias toward basic and acidic residues; that stretch reads KNMEKASKTTEAKPESKQEPVK. Ser612 carries the post-translational modification Phosphoserine. The span at 614–628 shows a compositional bias: low complexity; it reads ASTCSDASSIASSAS. A Phosphothreonine modification is found at Thr637. 3 positions are modified to phosphoserine: Ser808, Ser928, and Ser1018. 2 disordered regions span residues 999-1031 and 1052-1075; these read AGLGRHEAGASSSDHQDPVSPPIAPPSWVPDPP and TAATGTGQGPSTSTIPGPSTEPSV. The span at 1017 to 1031 shows a compositional bias: pro residues; the sequence is VSPPIAPPSWVPDPP. A compositionally biased stretch (polar residues) spans 1052-1073; that stretch reads TAATGTGQGPSTSTIPGPSTEP. Phosphothreonine occurs at positions 1115 and 1135. Residues 1177 to 1245 form a UBR-type zinc finger; it reads DTCSFTWTGA…EKCKCKTLIA (69 aa). Zn(2+)-binding residues include Cys1179, Cys1196, Cys1199, Cys1208, Cys1211, Cys1215, His1216, and His1219. Ser1227 bears the Phosphoserine mark. 3 residues coordinate Zn(2+): Cys1232, Cys1234, and Cys1240. Residues 1299–1318 are disordered; that stretch reads REDRNRKTASPEDSDMPDHD. Residues Ser1308, Ser1355, Ser1375, and Ser1481 each carry the phosphoserine modification. The segment at 1515–1740 is disordered; that stretch reads SVEPLPPRPS…PSSTSTPAAS (226 aa). A compositionally biased stretch (low complexity) spans 1524–1537; sequence SSDQSSSSSQSQSS. The segment covering 1538–1553 has biased composition (polar residues); sequence YIIRNPQQRRISQSQP. At Ser1549 the chain carries Phosphoserine. 2 stretches are compositionally biased toward acidic residues: residues 1559–1574 and 1605–1614; these read EEQDDIVSADVEEVEV and HDEDGSDMEL. Residues 1629 to 1638 are compositionally biased toward polar residues; it reads NHSNQDNASG. Low complexity-rich tracts occupy residues 1641-1657, 1668-1681, and 1726-1740; these read SVVTAATAGSEAGASSV, SNDSSDSDSSSSQS, and AASTAPSSTSTPAAS. Thr1736 carries the phosphothreonine modification. At Ser1741 the chain carries Phosphoserine. Residue Tyr1746 is modified to Phosphotyrosine. The residue at position 1780 (Ser1780) is a Phosphoserine. The tract at residues 1859-1890 is disordered; the sequence is LASAGDPGHPNHPLHASQNSARRERMTAREEA. The segment covering 1879-1890 has biased composition (basic and acidic residues); that stretch reads ARRERMTAREEA. Thr1969 is subject to Phosphothreonine. The segment at 1984-2021 is disordered; the sequence is GIDNEDSEHENDDDTNQSATLNDKDDDSLPAETGQNHP. The segment covering 1985–1998 has biased composition (acidic residues); sequence IDNEDSEHENDDDT. 3 positions are modified to phosphoserine: Ser1990, Ser2026, and Ser2028. Thr2030 carries the phosphothreonine modification. Residue Ser2076 is modified to Phosphoserine. The interval 2117-2142 is disordered; that stretch reads RQKKEGEEQPVLPEETESSKPGPSAH. A Phosphothreonine modification is found at Thr2213. 2 positions are modified to phosphoserine: Ser2241 and Ser2289. The tract at residues 2323 to 2392 is disordered; it reads HTSLMQRLRN…PSDDPEPLPA (70 aa). Composition is skewed to basic and acidic residues over residues 2332-2348 and 2356-2368; these read NRGERDREREREREMRR and SRRDRDRDFRRQL. In terms of domain architecture, PABC spans 2377 to 2454; the sequence is PASEGNPSDD…AMELIIAHGR (78 aa). In terms of domain architecture, HECT spans 2462–2799; sequence LDLGLVDSSE…AIKTKNFGFV (338 aa). Ser2469, Ser2484, and Ser2486 each carry phosphoserine. Residues 2473–2493 form a disordered region; it reads VQQENRKRHGSSRSVVDMDLD. Cys2768 functions as the Glycyl thioester intermediate in the catalytic mechanism.

It belongs to the UBR5 family. In terms of assembly, homotetramer; composed of a dimer of dimers. Associates with CDK9 and TFIIS/TCEA1 and forms a transcription regulatory complex made of CDK9, RNAP II, UBR5 and TFIIS/TCEA1 that can stimulate target gene transcription (e.g. gamma fibrinogen/FGG) by recruiting their promoters. Associates with the E3 ligase complex containing DYRK2, EDD/UBR5, DDB1 and DCAF1 proteins (EDVP complex). Binds TOPBP1. Interacts with PIH1D1. Interacts with CIB1. (Microbial infection) Interacts with human T-cell leukemia virus 1/HTLV-1 protein HBZ; this interaction modulates HBZ stability. As to expression, widely expressed. Most abundant in testis and expressed at high levels in brain, pituitary and kidney.

It localises to the nucleus. Its subcellular location is the cytoplasm. It carries out the reaction S-ubiquitinyl-[E2 ubiquitin-conjugating enzyme]-L-cysteine + [acceptor protein]-L-lysine = [E2 ubiquitin-conjugating enzyme]-L-cysteine + N(6)-ubiquitinyl-[acceptor protein]-L-lysine.. It functions in the pathway protein modification; protein ubiquitination. In terms of biological role, E3 ubiquitin-protein ligase involved in different protein quality control pathways in the cytoplasm and nucleus. Mainly acts as a ubiquitin chain elongator that extends pre-ubiquitinated substrates. Component of the N-end rule pathway: ubiquitinates proteins bearing specific N-terminal residues that are destabilizing according to the N-end rule, leading to their degradation. Recognizes type-1 N-degrons, containing positively charged amino acids (Arg, Lys and His). Together with UBR4, part of a cytoplasm protein quality control pathway that prevents protein aggregation by catalyzing assembly of heterotypic 'Lys-11'-/'Lys-48'-linked branched ubiquitin chains on aggregated proteins, leading to substrate recognition by the segregase p97/VCP and degradation by the proteasome: UBR5 is probably branching multiple 'Lys-48'-linked chains of substrates initially modified with mixed conjugates by UBR4. Together with ITCH, catalyzes 'Lys-48'-/'Lys-63'-branched ubiquitination of TXNIP, leading to its degradation: UBR5 mediates branching of 'Lys-48'-linked chains of substrates initially modified with 'Lys-63'-linked conjugates by ITCH. Catalytic component of a nuclear protein quality control pathway that mediates ubiquitination and degradation of unpaired transcription factors (i.e. transcription factors that are not assembled into functional multiprotein complexes): specifically recognizes and binds degrons that are not accessible when transcription regulators are associated with their coactivators. Ubiquitinates various unpaired transcription regulator (MYC, SUPT4H1, SUPT5H, CDC20 and MCRS1), as well as ligand-bound nuclear receptors (ESR1, NR1H3, NR3C1, PGR, RARA, RXRA AND VDR) that are not associated with their nuclear receptor coactivators (NCOAs). Involved in maturation and/or transcriptional regulation of mRNA by mediating polyubiquitination and activation of CDK9. Also acts as a regulator of DNA damage response by acting as a suppressor of RNF168, an E3 ubiquitin-protein ligase that promotes accumulation of 'Lys-63'-linked histone H2A and H2AX at DNA damage sites, thereby acting as a guard against excessive spreading of ubiquitinated chromatin at damaged chromosomes. Regulates DNA topoisomerase II binding protein (TopBP1) in the DNA damage response. Ubiquitinates acetylated PCK1. Acts as a positive regulator of the canonical Wnt signaling pathway by mediating (1) ubiquitination and stabilization of CTNNB1, and (2) 'Lys-48'-linked ubiquitination and degradation of TLE3. Promotes disassembly of the mitotic checkpoint complex (MCC) from the APC/C complex by catalyzing ubiquitination of BUB1B, BUB3 and CDC20. Plays an essential role in extraembryonic development. Required for the maintenance of skeletal tissue homeostasis by acting as an inhibitor of hedgehog (HH) signaling. The sequence is that of E3 ubiquitin-protein ligase UBR5 (UBR5) from Homo sapiens (Human).